Reading from the N-terminus, the 346-residue chain is MSFRTIEWRDDKVVMIDQTRLPGEEVYCEYADYKSVAEAIRGMVIRGAPAIGVAAAMGVALGAREIIADTYESFFRQMENVCDVMARTRPTAVNLFWAIERMKRVADENRDKPLDQLREILKTEAIRIEQEDLELCKAIGRHGAALIPEGATVLTHCNAGGLATAGYGTALGVIRAAHDAGKKIQVFADETRPWLQGARLTAWELMKDGIPVTLISDNMAGFFMKRGEIACCVVGADRIAANGDTANKIGTYSVAVLAKENNIPFYVAAPTTTLDLSLENGDQIPIEERHSREVTHLHGFPVAPEGIRVRNPAFDVTPARYISAIITEQGVVSGDYVTGLRGLVAP.

Residues 46 to 48 (RGA), R89, and Q196 contribute to the substrate site. D237 serves as the catalytic Proton donor. 247–248 (NK) contacts substrate.

The protein belongs to the eIF-2B alpha/beta/delta subunits family. MtnA subfamily.

It catalyses the reaction 5-(methylsulfanyl)-alpha-D-ribose 1-phosphate = 5-(methylsulfanyl)-D-ribulose 1-phosphate. It functions in the pathway amino-acid biosynthesis; L-methionine biosynthesis via salvage pathway; L-methionine from S-methyl-5-thio-alpha-D-ribose 1-phosphate: step 1/6. Functionally, catalyzes the interconversion of methylthioribose-1-phosphate (MTR-1-P) into methylthioribulose-1-phosphate (MTRu-1-P). This Geobacter sulfurreducens (strain ATCC 51573 / DSM 12127 / PCA) protein is Methylthioribose-1-phosphate isomerase.